Consider the following 223-residue polypeptide: ATP phosphoribosyltransferase (223 aa).

It belongs to the ATP phosphoribosyltransferase family. Short subfamily. Heteromultimer composed of HisG and HisZ subunits.

It localises to the cytoplasm. The catalysed reaction is 1-(5-phospho-beta-D-ribosyl)-ATP + diphosphate = 5-phospho-alpha-D-ribose 1-diphosphate + ATP. It participates in amino-acid biosynthesis; L-histidine biosynthesis; L-histidine from 5-phospho-alpha-D-ribose 1-diphosphate: step 1/9. In terms of biological role, catalyzes the condensation of ATP and 5-phosphoribose 1-diphosphate to form N'-(5'-phosphoribosyl)-ATP (PR-ATP). Has a crucial role in the pathway because the rate of histidine biosynthesis seems to be controlled primarily by regulation of HisG enzymatic activity. The sequence is that of ATP phosphoribosyltransferase from Bordetella pertussis (strain Tohama I / ATCC BAA-589 / NCTC 13251).